Reading from the N-terminus, the 129-residue chain is Large ribosomal subunit protein bL20 (129 aa).

The protein belongs to the bacterial ribosomal protein bL20 family.

Its function is as follows. Binds directly to 23S ribosomal RNA and is necessary for the in vitro assembly process of the 50S ribosomal subunit. It is not involved in the protein synthesizing functions of that subunit. The protein is Large ribosomal subunit protein bL20 of Kineococcus radiotolerans (strain ATCC BAA-149 / DSM 14245 / SRS30216).